The primary structure comprises 397 residues: Cysteine desulfurase IscS (397 aa).

Residues 72–73, asparagine 152, glutamine 180, and 200–202 contribute to the pyridoxal 5'-phosphate site; these read GS and SAH. Position 203 is an N6-(pyridoxal phosphate)lysine (lysine 203). A pyridoxal 5'-phosphate-binding site is contributed by threonine 238. The active-site Cysteine persulfide intermediate is cysteine 328. Cysteine 328 is a binding site for [2Fe-2S] cluster.

This sequence belongs to the class-V pyridoxal-phosphate-dependent aminotransferase family. NifS/IscS subfamily. In terms of assembly, homodimer. Forms a heterotetramer with IscU, interacts with other sulfur acceptors. The cofactor is pyridoxal 5'-phosphate.

It localises to the cytoplasm. It carries out the reaction (sulfur carrier)-H + L-cysteine = (sulfur carrier)-SH + L-alanine. It functions in the pathway cofactor biosynthesis; iron-sulfur cluster biosynthesis. Master enzyme that delivers sulfur to a number of partners involved in Fe-S cluster assembly, tRNA modification or cofactor biosynthesis. Catalyzes the removal of elemental sulfur atoms from cysteine to produce alanine. Functions as a sulfur delivery protein for Fe-S cluster synthesis onto IscU, an Fe-S scaffold assembly protein, as well as other S acceptor proteins. The sequence is that of Cysteine desulfurase IscS from Clostridium botulinum (strain Kyoto / Type A2).